Here is a 750-residue protein sequence, read N- to C-terminus: MGRSESQMDITDINTPKPKKKQRWTPLEISLSVLVLLLTVIAVTMIALYATYDDGICKSSDCIKSAARLIQNMDATAEPCTDFFKYACGGWLKRNVIPETSSRYSNFDILRDELEVILKDVLQEPKTEDIVAVQKAKTLYRSCVNETAIDSRGGQPLLKLLPDVYGWPVATQNWEQTYGTSWSAEKSIAQLNSNYGKKVLINFFVGTDDKNSMNHIIHIDQPRLGLPSRDYYECTGIYKEACTAYVDFMIAVAKLIRQEEGLPIDENQISVEMNKVMELEKEIANATTKSEDRNDPMLLYNKMTLAQIQNNFSLEINGKPFSWSNFTNEIMSTVNINIPNEEDVVVYAPEYLIKLKPILTKYFPRDFQNLFSWRFIMDLVSSLSRTYKDSRNAFRKALYGTTSESATWRRCANYVNGNMENAVGRLYVEAAFAGESKHVVEDLIAQIREVFIQTLDDLTWMDAETKKKAEEKALAIKERIGYPDDIVSNDNKLNNEYLELNYKEDEYFENIIQNLKFSQSKQLKKLREKVDKDEWITGAAIVNAFYSSGRNQIVFPAGILQPPFFSAQQSNSLNYGGIGMVIGHEITHGFDDNGRNFNKDGDLVDWWTQQSANNFKEQSQCMVYQYGNFSWDLAGGQHLNGINTLGENIADNGGIGQAYRAYQNYVKKNGEEKLLPGIDLNHKQLFFLNFAQVWCGTYRPEYAVNSIKTDVHSPGNFRIIGSLQNSVEFSEAFQCPKNSYMNPEKKCRVW.

The span at 1–14 (MGRSESQMDITDIN) shows a compositional bias: polar residues. Residues 1–20 (MGRSESQMDITDINTPKPKK) are disordered. The N-myristoyl glycine moiety is linked to residue glycine 2. The Cytoplasmic segment spans residues 2 to 28 (GRSESQMDITDINTPKPKKKQRWTPLE). 2 positions are modified to phosphoserine: serine 4 and serine 6. The Stop-transfer sequence motif lies at 16 to 23 (PKPKKKQR). Residues 29–51 (ISLSVLVLLLTVIAVTMIALYAT) form a helical; Signal-anchor for type II membrane protein membrane-spanning segment. At 52–750 (YDDGICKSSD…MNPEKKCRVW (699 aa)) the chain is on the extracellular side. Residues 56-750 (ICKSSDCIKS…MNPEKKCRVW (695 aa)) enclose the Peptidase M13 domain. Intrachain disulfides connect cysteine 57/cysteine 62, cysteine 80/cysteine 735, cysteine 88/cysteine 695, cysteine 143/cysteine 411, cysteine 234/cysteine 242, and cysteine 621/cysteine 747. Arginine 103 lines the a peptide pocket. Asparagine 145 carries N-linked (GlcNAc...) asparagine glycosylation. N-linked (GlcNAc...) asparagine glycans are attached at residues asparagine 285, asparagine 311, and asparagine 325. Histidine 584 is a Zn(2+) binding site. Residue glutamate 585 is part of the active site. A Zn(2+)-binding site is contributed by histidine 588. Residue asparagine 628 is glycosylated (N-linked (GlcNAc...) asparagine). Glutamate 647 is a Zn(2+) binding site. Aspartate 651 serves as the catalytic Proton donor.

It belongs to the peptidase M13 family. Zn(2+) is required as a cofactor. Post-translationally, myristoylation is a determinant of membrane targeting. In terms of processing, glycosylation at Asn-628 is necessary both for surface expression and neutral endopeptidase activity.

Its subcellular location is the cell membrane. It catalyses the reaction Preferential cleavage of polypeptides between hydrophobic residues, particularly with Phe or Tyr at P1'.. It carries out the reaction substance P + H2O = substance P(1-9) + L-Leu-L-Met-NH2. The enzyme catalyses substance P + H2O = substance P(1-7) + L-Phe-Gly-L-Leu-L-Met-NH2. The catalysed reaction is neurotensin + H2O = neurotensin(1-11) + L-isoleucyl-L-leucine. It catalyses the reaction neurotensin + H2O = neurotensin(1-10) + L-tyrosyl-L-isoleucyl-L-leucine. Inhibited by mixanpril, an orally-active drug used for the treatment of hypertension. Functionally, thermolysin-like specificity, but is almost confined on acting on polypeptides of up to 30 amino acids. Biologically important in the destruction of opioid peptides such as Met- and Leu-enkephalins by cleavage of a Gly-Phe bond. Catalyzes cleavage of bradykinin, substance P and neurotensin peptides. Able to cleave angiotensin-1, angiotensin-2 and angiotensin 1-9. Involved in the degradation of atrial natriuretic factor (ANF) and brain natriuretic factor (BNP(1-32)). Displays UV-inducible elastase activity toward skin preelastic and elastic fibers. The protein is Neprilysin (MME) of Oryctolagus cuniculus (Rabbit).